Consider the following 823-residue polypeptide: NAD-dependent histone deacetylase sirtuin-1 (823 aa).

Positions 41 to 67 are enriched in low complexity; sequence LASTSTEAEAEAEATATTTEPATSELA. Residues 41–146 are disordered; it reads LASTSTEAEA…SSSNCSSSVE (106 aa). Residues 72 to 95 are compositionally biased toward basic and acidic residues; that stretch reads GEIKTKTLAAREEQEIGANLEHKT. The segment covering 104 to 137 has biased composition (acidic residues); the sequence is EDEDDEEEEEEDDEEEEEDDEEGITGTSNEDEDS. One can recognise a Deacetylase sirtuin-type domain in the interval 204 to 499; it reads KLASVNTFDD…LCCDESVLTE (296 aa). Residues 229–248 and 313–316 contribute to the NAD(+) site; these read GAGV…NGIY and QNID. The active-site Proton acceptor is His331. Zn(2+) contacts are provided by Cys339, Cys342, Cys363, and Cys366. Residues 427–429, 452–454, and Ser469 contribute to the NAD(+) site; these read GSS and NRE. Residues Ser618 and Ser621 each carry the phosphoserine modification. The segment covering 698 to 707 has biased composition (acidic residues); the sequence is DYSDDDDEEE. Disordered stretches follow at residues 698-722 and 777-823; these read DYSD…GNVG and IIEQ…LAAV. Positions 798-813 are enriched in basic and acidic residues; that stretch reads PSEENKQQTQIERSEE. The segment covering 814-823 has biased composition (pro residues); it reads SPPPGQLAAV.

The protein belongs to the sirtuin family. Class I subfamily. In terms of assembly, interacts with the transcriptional repressors hairy (hry) and deadpan (dpn); via basic domains. Associates with the Esc/E(z) histone methyltransferase complex. Interacts directly with E(z) and HDAC1/Rpd3. Zn(2+) serves as cofactor.

Its subcellular location is the cytoplasm. The protein localises to the nucleus. It localises to the chromosome. The catalysed reaction is N(6)-acetyl-L-lysyl-[protein] + NAD(+) + H2O = 2''-O-acetyl-ADP-D-ribose + nicotinamide + L-lysyl-[protein]. In terms of biological role, NAD-dependent histone deacetylase involved in heterochromatic silencing. Mildly suppresses the heterochromatin-mediated silencing phenomenon known as position-effect variegation (PEV). Required for epigenetic silencing of the polycomb group proteins. Has histone H4 deacetylase activity in vitro. Required maternally for establishing proper segmentation of the embryo. Involved in sex determination. May be involved in the regulation of life span. The polypeptide is NAD-dependent histone deacetylase sirtuin-1 (Drosophila melanogaster (Fruit fly)).